The sequence spans 330 residues: Probable L-asparaginase (330 aa).

The Asparaginase/glutaminase domain maps to 6–330; it reads PTIALLATGG…EKIQEMFEEY (325 aa). Residue Thr16 is the O-isoaspartyl threonine intermediate of the active site. Residues Ser62 and 95 to 96 each bind substrate; that span reads TD.

The protein belongs to the asparaginase 1 family.

Its subcellular location is the cytoplasm. It catalyses the reaction L-asparagine + H2O = L-aspartate + NH4(+). This is Probable L-asparaginase (ansA) from Helicobacter pylori (strain ATCC 700392 / 26695) (Campylobacter pylori).